The following is a 300-amino-acid chain: MATLISERQHPQAIWRDYLELTKPKVVVLMLITSLVGMFLATRAGVPWTVLVFGNLGIALCAGGAAAVNHVVDRRIDALMARTHKRPLAEGRVSPRAALAFALLLALAGQALLLTFTNPLTAWLTLASLLGYAVVYTGFLKRATPQNIVIGGLAGAAPPLLGWVAATGHMSAEPLLLVLIIFAWTPPHFWALAIHRKEEYAKADIPMLPVTHGEHYTKVHILLYTFALLAVSLLPYVIHMSGVLYLVCALALGGRFLQWAWVLYRGTRPHAAINTFKYSIYYLFLLFIALLVDHYLLLNL.

The next 8 helical transmembrane spans lie at 26–46 (VVVL…RAGV), 48–68 (WTVL…AAAV), 97–117 (AALA…LTFT), 120–140 (LTAW…TGFL), 148–168 (IVIG…AATG), 174–194 (PLLL…ALAI), 226–246 (FALL…VLYL), and 280–300 (IYYL…LLNL).

It belongs to the UbiA prenyltransferase family. Protoheme IX farnesyltransferase subfamily.

The protein localises to the cell inner membrane. It catalyses the reaction heme b + (2E,6E)-farnesyl diphosphate + H2O = Fe(II)-heme o + diphosphate. It participates in porphyrin-containing compound metabolism; heme O biosynthesis; heme O from protoheme: step 1/1. In terms of biological role, converts heme B (protoheme IX) to heme O by substitution of the vinyl group on carbon 2 of heme B porphyrin ring with a hydroxyethyl farnesyl side group. The chain is Protoheme IX farnesyltransferase 1 from Pseudomonas fluorescens (strain ATCC BAA-477 / NRRL B-23932 / Pf-5).